A 329-amino-acid chain; its full sequence is Phosphate acyltransferase (329 aa).

Belongs to the PlsX family. In terms of assembly, homodimer. Probably interacts with PlsY.

It localises to the cytoplasm. It catalyses the reaction a fatty acyl-[ACP] + phosphate = an acyl phosphate + holo-[ACP]. It functions in the pathway lipid metabolism; phospholipid metabolism. Its function is as follows. Catalyzes the reversible formation of acyl-phosphate (acyl-PO(4)) from acyl-[acyl-carrier-protein] (acyl-ACP). This enzyme utilizes acyl-ACP as fatty acyl donor, but not acyl-CoA. The protein is Phosphate acyltransferase of Campylobacter fetus subsp. fetus (strain 82-40).